The following is a 430-amino-acid chain: Sesquiterpene synthase 15 (430 aa).

Mg(2+) is bound by residues Asp-182, Asp-186, and Glu-335. A DDXXD motif motif is present at residues 182–186 (DDIYD).

The protein belongs to the terpene synthase family. Tpsa subfamily. The cofactor is Mg(2+). Mn(2+) serves as cofactor.

It participates in secondary metabolite biosynthesis; terpenoid biosynthesis. Functionally, sesquiterpene synthase involved in the biosynthesis of volatile compounds. No activity detected with geranyl diphosphate (GPP) and farnesyl diphosphate (FPP) as substrates. The chain is Sesquiterpene synthase 15 from Solanum lycopersicum (Tomato).